The primary structure comprises 64 residues: Insect toxin OsI1 (64 aa).

An LCN-type CS-alpha/beta domain is found at 1–61 (DGYPKQKDGC…MWKYETNTCG (61 aa)). Cystine bridges form between cysteine 10/cysteine 60, cysteine 14/cysteine 35, cysteine 21/cysteine 42, and cysteine 25/cysteine 44. Glycine 61 bears the Glycine amide mark.

It belongs to the long (4 C-C) scorpion toxin superfamily. Sodium channel inhibitor family. Beta subfamily. Expressed by the venom gland.

It is found in the secreted. Its function is as follows. Depressant insect beta-toxins cause a transient contraction paralysis followed by a slow flaccid paralysis. They bind voltage-independently at site-4 of sodium channels (Nav) and shift the voltage of activation toward more negative potentials thereby affecting sodium channel activation and promoting spontaneous and repetitive firing. This toxin is active only on insects. This Orthochirus scrobiculosus (Central Asian scorpion) protein is Insect toxin OsI1.